The chain runs to 250 residues: MIVIPAVDIRQGKCVRLSQGRADAQTVYSDDPAAMAAKWEGMGAARIHVVDLDGAFEKTPKNLGAIKKILETVKKPVQVGGGIRDLATMETYLDLGVSNIIIGTEAIRNPEMVKDACKRFPGKIIVGIDAKEGMVAVEGWTETTSVRAVDLARSFEDAGVAAINFTDIHRDGMQTGPNIEQTRAFAQAISIPVVASGGVSTIKDIKAVKTLAKDGVVGVITGRALYVGTLDLAEAVSEAMEGVDPDYNPF.

Residue Asp-8 is the Proton acceptor of the active site. Catalysis depends on Asp-129, which acts as the Proton donor.

The protein belongs to the HisA/HisF family.

The protein localises to the cytoplasm. It carries out the reaction 1-(5-phospho-beta-D-ribosyl)-5-[(5-phospho-beta-D-ribosylamino)methylideneamino]imidazole-4-carboxamide = 5-[(5-phospho-1-deoxy-D-ribulos-1-ylimino)methylamino]-1-(5-phospho-beta-D-ribosyl)imidazole-4-carboxamide. It functions in the pathway amino-acid biosynthesis; L-histidine biosynthesis; L-histidine from 5-phospho-alpha-D-ribose 1-diphosphate: step 4/9. The polypeptide is 1-(5-phosphoribosyl)-5-[(5-phosphoribosylamino)methylideneamino] imidazole-4-carboxamide isomerase (Desulfatibacillum aliphaticivorans).